The following is a 170-amino-acid chain: Myelin-associated oligodendrocyte basic protein (170 aa).

The tract at residues 69–170 (SRRATSPQKP…GSPTRAPRFW (102 aa)) is disordered. The span at 82 to 92 (PAASPVVVRAP) shows a compositional bias: low complexity. 3 positions are modified to phosphoserine: serine 85, serine 98, and serine 107. Repeat 1 spans residues 93–101 (PAKPKSPPR). The segment covering 93-114 (PAKPKSPPRPAKPRSPPIPAKP) has biased composition (pro residues). Residues 93 to 119 (PAKPKSPPRPAKPRSPPIPAKPRSPSR) form a 3 X 9 AA approximate tandem repeats region. Residues 105-110 (PRSPPI) form a 2; half-length repeat. Repeat unit 3 spans residues 111–119 (PAKPRSPSR). Residues 118–130 (SRTERQPRPRPEV) are compositionally biased toward basic and acidic residues. Residues 138–151 (KPPQKSKQPARSSP) are compositionally biased toward low complexity.

Expressed predominantly in oligodendrocytes, in CNS myelin of the cerebrum and spinal cord. No expression seen in sciatic nerve.

It localises to the cytoplasm. The protein resides in the perinuclear region. May play a role in compacting or stabilizing the myelin sheath, possibly by binding the negatively charged acidic phospholipids of the cytoplasmic membrane. This is Myelin-associated oligodendrocyte basic protein (Mobp) from Rattus norvegicus (Rat).